The following is a 388-amino-acid chain: Probable protein phosphatase 2C 43 (388 aa).

In terms of domain architecture, PPM-type phosphatase spans 53–352 (EFSFAVVQAN…DDITVVVVFI (300 aa)). Mn(2+) is bound by residues aspartate 84, glycine 85, aspartate 284, and aspartate 343.

Belongs to the PP2C family. Mg(2+) is required as a cofactor. Requires Mn(2+) as cofactor.

The enzyme catalyses O-phospho-L-seryl-[protein] + H2O = L-seryl-[protein] + phosphate. It catalyses the reaction O-phospho-L-threonyl-[protein] + H2O = L-threonyl-[protein] + phosphate. The polypeptide is Probable protein phosphatase 2C 43 (Oryza sativa subsp. japonica (Rice)).